We begin with the raw amino-acid sequence, 298 residues long: Glycine--tRNA ligase alpha subunit (298 aa).

The protein belongs to the class-II aminoacyl-tRNA synthetase family. In terms of assembly, tetramer of two alpha and two beta subunits.

It localises to the cytoplasm. The catalysed reaction is tRNA(Gly) + glycine + ATP = glycyl-tRNA(Gly) + AMP + diphosphate. This Helicobacter acinonychis (strain Sheeba) protein is Glycine--tRNA ligase alpha subunit.